The chain runs to 627 residues: Carene synthase, chloroplastic (627 aa).

A chloroplast-targeting transit peptide spans 1–36 (MSVISIMPLASKPCLNKSFISSTHEPKALRRPISTV). The Mg(2+) site is built by aspartate 378, aspartate 382, and aspartate 530. A DDXXD motif motif is present at residues 378–382 (DDMYD).

It belongs to the terpene synthase family. Tpsd subfamily. The cofactor is Mg(2+). It depends on Mn(2+) as a cofactor.

Its subcellular location is the plastid. The protein localises to the chloroplast. The enzyme catalyses (2E)-geranyl diphosphate = (+)-car-3-ene + diphosphate. It functions in the pathway terpene metabolism; oleoresin biosynthesis. In terms of biological role, terpene synthase (TPS) involved in defensive oleoresin formation in conifers in response to insect attack or other injury. This chain is Carene synthase, chloroplastic (3CAR), found in Picea glauca (White spruce).